Consider the following 142-residue polypeptide: Large ribosomal subunit protein uL11 (142 aa).

It belongs to the universal ribosomal protein uL11 family. Part of the ribosomal stalk of the 50S ribosomal subunit. Interacts with L10 and the large rRNA to form the base of the stalk. L10 forms an elongated spine to which L12 dimers bind in a sequential fashion forming a multimeric L10(L12)X complex. Post-translationally, one or more lysine residues are methylated.

Functionally, forms part of the ribosomal stalk which helps the ribosome interact with GTP-bound translation factors. The protein is Large ribosomal subunit protein uL11 of Rhodopseudomonas palustris (strain BisA53).